Here is a 360-residue protein sequence, read N- to C-terminus: Phospho-N-acetylmuramoyl-pentapeptide-transferase (360 aa).

10 helical membrane-spanning segments follow: residues 26–46, 74–94, 97–117, 134–154, 168–188, 199–219, 236–256, 263–283, 288–308, and 338–358; these read AILG…KLIE, MGGL…GDLG, YVWV…IDDY, YILQ…TAAN, VMPQ…VGSS, GLAI…AYLS, SGEL…FLWF, VFMG…IAVL, ILLV…ILQV, and VIVR…ATLK.

Belongs to the glycosyltransferase 4 family. MraY subfamily. Mg(2+) serves as cofactor.

The protein resides in the cell inner membrane. The catalysed reaction is UDP-N-acetyl-alpha-D-muramoyl-L-alanyl-gamma-D-glutamyl-meso-2,6-diaminopimeloyl-D-alanyl-D-alanine + di-trans,octa-cis-undecaprenyl phosphate = di-trans,octa-cis-undecaprenyl diphospho-N-acetyl-alpha-D-muramoyl-L-alanyl-D-glutamyl-meso-2,6-diaminopimeloyl-D-alanyl-D-alanine + UMP. It participates in cell wall biogenesis; peptidoglycan biosynthesis. Its function is as follows. Catalyzes the initial step of the lipid cycle reactions in the biosynthesis of the cell wall peptidoglycan: transfers peptidoglycan precursor phospho-MurNAc-pentapeptide from UDP-MurNAc-pentapeptide onto the lipid carrier undecaprenyl phosphate, yielding undecaprenyl-pyrophosphoryl-MurNAc-pentapeptide, known as lipid I. The polypeptide is Phospho-N-acetylmuramoyl-pentapeptide-transferase (Shewanella baltica (strain OS195)).